Reading from the N-terminus, the 88-residue chain is MKQVLLGGIHFYQKVISPMKPATCRFYPTCSHYGKEAIEKHGALRGGYLTTRRLLRCQPFHPGGLDFVPETFDWKAPLQRENPAEHQK.

Belongs to the UPF0161 family.

Its subcellular location is the cell membrane. Could be involved in insertion of integral membrane proteins into the membrane. The polypeptide is Putative membrane protein insertion efficiency factor (Exiguobacterium sibiricum (strain DSM 17290 / CCUG 55495 / CIP 109462 / JCM 13490 / 255-15)).